The sequence spans 208 residues: Guanylate kinase (208 aa).

A Guanylate kinase-like domain is found at 4-181 (GLLIVISGPS…AVEKIQSIIS (178 aa)). 11–18 (GPSGTGKG) contacts ATP.

It belongs to the guanylate kinase family.

Its subcellular location is the cytoplasm. The catalysed reaction is GMP + ATP = GDP + ADP. Essential for recycling GMP and indirectly, cGMP. This is Guanylate kinase from Clostridium tetani (strain Massachusetts / E88).